We begin with the raw amino-acid sequence, 109 residues long: Cell division protein ZapA (109 aa).

Residues 22-99 (EQQDALNMAA…IEQALLEQGR (78 aa)) are a coiled coil.

The protein belongs to the ZapA family. Type 1 subfamily. Homodimer. Interacts with FtsZ.

It is found in the cytoplasm. Its function is as follows. Activator of cell division through the inhibition of FtsZ GTPase activity, therefore promoting FtsZ assembly into bundles of protofilaments necessary for the formation of the division Z ring. It is recruited early at mid-cell but it is not essential for cell division. The chain is Cell division protein ZapA from Yersinia enterocolitica serotype O:8 / biotype 1B (strain NCTC 13174 / 8081).